A 404-amino-acid chain; its full sequence is Cysteine desulfurase IscS (404 aa).

Residues 75 to 76, Asn-155, Gln-183, and 203 to 205 contribute to the pyridoxal 5'-phosphate site; these read AT and SAH. Lys-206 carries the N6-(pyridoxal phosphate)lysine modification. Thr-243 lines the pyridoxal 5'-phosphate pocket. The Cysteine persulfide intermediate role is filled by Cys-328. Cys-328 provides a ligand contact to [2Fe-2S] cluster.

The protein belongs to the class-V pyridoxal-phosphate-dependent aminotransferase family. NifS/IscS subfamily. Homodimer. Forms a heterotetramer with IscU, interacts with other sulfur acceptors. Requires pyridoxal 5'-phosphate as cofactor.

The protein resides in the cytoplasm. The enzyme catalyses (sulfur carrier)-H + L-cysteine = (sulfur carrier)-SH + L-alanine. It functions in the pathway cofactor biosynthesis; iron-sulfur cluster biosynthesis. Its function is as follows. Master enzyme that delivers sulfur to a number of partners involved in Fe-S cluster assembly, tRNA modification or cofactor biosynthesis. Catalyzes the removal of elemental sulfur atoms from cysteine to produce alanine. Functions as a sulfur delivery protein for Fe-S cluster synthesis onto IscU, an Fe-S scaffold assembly protein, as well as other S acceptor proteins. The chain is Cysteine desulfurase IscS from Pseudomonas syringae pv. tomato (strain ATCC BAA-871 / DC3000).